A 667-amino-acid chain; its full sequence is tRNA uridine 5-carboxymethylaminomethyl modification enzyme MnmG (667 aa).

13–18 (GGGHAG) is a binding site for FAD. 280-294 (GPRYCPSVEDKINRF) is an NAD(+) binding site.

This sequence belongs to the MnmG family. Homodimer. Heterotetramer of two MnmE and two MnmG subunits. Requires FAD as cofactor.

It is found in the cytoplasm. Functionally, NAD-binding protein involved in the addition of a carboxymethylaminomethyl (cmnm) group at the wobble position (U34) of certain tRNAs, forming tRNA-cmnm(5)s(2)U34. This chain is tRNA uridine 5-carboxymethylaminomethyl modification enzyme MnmG, found in Polaromonas naphthalenivorans (strain CJ2).